The sequence spans 286 residues: tRNA(Ile)-lysidine synthase (286 aa).

7-12 (SGGPDS) contributes to the ATP binding site.

This sequence belongs to the tRNA(Ile)-lysidine synthase family.

Its subcellular location is the cytoplasm. The catalysed reaction is cytidine(34) in tRNA(Ile2) + L-lysine + ATP = lysidine(34) in tRNA(Ile2) + AMP + diphosphate + H(+). In terms of biological role, ligates lysine onto the cytidine present at position 34 of the AUA codon-specific tRNA(Ile) that contains the anticodon CAU, in an ATP-dependent manner. Cytidine is converted to lysidine, thus changing the amino acid specificity of the tRNA from methionine to isoleucine. The polypeptide is tRNA(Ile)-lysidine synthase (Mycoplasmopsis pulmonis (strain UAB CTIP) (Mycoplasma pulmonis)).